The sequence spans 245 residues: Phosducin (245 aa).

The disordered stretch occupies residues 1 to 67 (MEEARRQSLE…SRDDKDSKER (67 aa)). The Phosducin domain maps to 1-241 (MEEARRQSLE…IHALEQTSME (241 aa)). The segment covering 58–67 (SRDDKDSKER) has biased composition (basic and acidic residues). Phosphoserine; by PKA is present on Ser73. The tract at residues 111-245 (YGFVYELETG…EQTSMEEDVE (135 aa)) is thioredoxin fold.

This sequence belongs to the phosducin family. Forms a complex with the beta and gamma subunits of the GTP-binding protein, transducin. Interacts with CRX. In terms of processing, light-induced changes in cyclic nucleotide levels modulate the phosphorylation of this protein by cAMP kinase.

It is found in the cytoplasm. It localises to the cytosol. Its subcellular location is the nucleus. The protein localises to the cell projection. The protein resides in the cilium. It is found in the photoreceptor outer segment. It localises to the photoreceptor inner segment. Functionally, may participate in the regulation of visual phototransduction or in the integration of photoreceptor metabolism. Inhibits the transcriptional activation activity of the cone-rod homeobox CRX. This is Phosducin (PDC) from Equus caballus (Horse).